A 580-amino-acid chain; its full sequence is Acyl-coenzyme A synthetase ACSM4, mitochondrial (580 aa).

The transit peptide at 1-22 (MKIFFRYQTFRFIWLTKPPGRR) directs the protein to the mitochondrion. Residues 229–237 (TSGTTGFPK), 368–373 (EGYGQT), D455, R470, and K566 contribute to the ATP site.

This sequence belongs to the ATP-dependent AMP-binding enzyme family. Mg(2+) serves as cofactor. It depends on Mn(2+) as a cofactor.

It is found in the mitochondrion. The enzyme catalyses a medium-chain fatty acid + ATP + CoA = a medium-chain fatty acyl-CoA + AMP + diphosphate. It catalyses the reaction hexanoate + ATP + CoA = hexanoyl-CoA + AMP + diphosphate. It carries out the reaction octanoate + ATP + CoA = octanoyl-CoA + AMP + diphosphate. The catalysed reaction is decanoate + ATP + CoA = decanoyl-CoA + AMP + diphosphate. The enzyme catalyses dodecanoate + ATP + CoA = dodecanoyl-CoA + AMP + diphosphate. In terms of biological role, catalyzes the activation of fatty acids by CoA to produce an acyl-CoA, the first step in fatty acid metabolism. Capable of activating medium-chain fatty acids with a preference for C6-12 fatty acids. The polypeptide is Acyl-coenzyme A synthetase ACSM4, mitochondrial (ACSM4) (Homo sapiens (Human)).